We begin with the raw amino-acid sequence, 1447 residues long: DNA-directed RNA polymerase subunit beta' (1447 aa).

4 residues coordinate Zn(2+): Cys-70, Cys-72, Cys-85, and Cys-88. Mg(2+) is bound by residues Asp-460, Asp-462, and Asp-464. Residues Cys-890, Cys-964, Cys-971, and Cys-974 each coordinate Zn(2+).

Belongs to the RNA polymerase beta' chain family. In terms of assembly, the RNAP catalytic core consists of 2 alpha, 1 beta, 1 beta' and 1 omega subunit. When a sigma factor is associated with the core the holoenzyme is formed, which can initiate transcription. It depends on Mg(2+) as a cofactor. Zn(2+) serves as cofactor.

It carries out the reaction RNA(n) + a ribonucleoside 5'-triphosphate = RNA(n+1) + diphosphate. DNA-dependent RNA polymerase catalyzes the transcription of DNA into RNA using the four ribonucleoside triphosphates as substrates. This is DNA-directed RNA polymerase subunit beta' from Desulfosudis oleivorans (strain DSM 6200 / JCM 39069 / Hxd3) (Desulfococcus oleovorans).